The following is a 130-amino-acid chain: Small ribosomal subunit protein uS11 (130 aa).

This sequence belongs to the universal ribosomal protein uS11 family. In terms of assembly, part of the 30S ribosomal subunit. Interacts with proteins S7 and S18. Binds to IF-3.

Functionally, located on the platform of the 30S subunit, it bridges several disparate RNA helices of the 16S rRNA. Forms part of the Shine-Dalgarno cleft in the 70S ribosome. This is Small ribosomal subunit protein uS11 from Shewanella frigidimarina (strain NCIMB 400).